Reading from the N-terminus, the 182-residue chain is Large ribosomal subunit protein uL6 (182 aa).

Belongs to the universal ribosomal protein uL6 family. In terms of assembly, part of the 50S ribosomal subunit.

Functionally, this protein binds to the 23S rRNA, and is important in its secondary structure. It is located near the subunit interface in the base of the L7/L12 stalk, and near the tRNA binding site of the peptidyltransferase center. The protein is Large ribosomal subunit protein uL6 of Desulforamulus reducens (strain ATCC BAA-1160 / DSM 100696 / MI-1) (Desulfotomaculum reducens).